A 157-amino-acid chain; its full sequence is UPF0225 protein PA14_50900 (157 aa).

The protein belongs to the UPF0225 family.

This Pseudomonas aeruginosa (strain UCBPP-PA14) protein is UPF0225 protein PA14_50900.